Here is a 29-residue protein sequence, read N- to C-terminus: Trypsin inhibitor 1 (29 aa).

3 disulfide bridges follow: C3/C20, C10/C22, and C16/C28.

The protein belongs to the protease inhibitor I7 (squash-type serine protease inhibitor) family.

It is found in the secreted. Inhibits trypsin. The sequence is that of Trypsin inhibitor 1 from Momordica repens.